The following is a 105-amino-acid chain: Integration host factor subunit alpha (105 aa).

This sequence belongs to the bacterial histone-like protein family. As to quaternary structure, heterodimer of an alpha and a beta chain.

Its function is as follows. This protein is one of the two subunits of integration host factor, a specific DNA-binding protein that functions in genetic recombination as well as in transcriptional and translational control. The protein is Integration host factor subunit alpha of Rhodospirillum rubrum (strain ATCC 11170 / ATH 1.1.1 / DSM 467 / LMG 4362 / NCIMB 8255 / S1).